Consider the following 116-residue polypeptide: NADH-ubiquinone oxidoreductase chain 3 (116 aa).

Transmembrane regions (helical) follow at residues 3–23 (LITT…TISF), 56–76 (FFLI…LLPL), and 87–107 (LTLI…IYEW).

It belongs to the complex I subunit 3 family.

The protein localises to the mitochondrion membrane. It catalyses the reaction a ubiquinone + NADH + 5 H(+)(in) = a ubiquinol + NAD(+) + 4 H(+)(out). Functionally, core subunit of the mitochondrial membrane respiratory chain NADH dehydrogenase (Complex I) that is believed to belong to the minimal assembly required for catalysis. Complex I functions in the transfer of electrons from NADH to the respiratory chain. The immediate electron acceptor for the enzyme is believed to be ubiquinone. The sequence is that of NADH-ubiquinone oxidoreductase chain 3 (MT-ND3) from Oncorhynchus keta (Chum salmon).